The chain runs to 137 residues: Large ribosomal subunit protein uL16 (137 aa).

The protein belongs to the universal ribosomal protein uL16 family. In terms of assembly, part of the 50S ribosomal subunit.

Binds 23S rRNA and is also seen to make contacts with the A and possibly P site tRNAs. The polypeptide is Large ribosomal subunit protein uL16 (Azotobacter vinelandii (strain DJ / ATCC BAA-1303)).